The following is a 68-amino-acid chain: Potassium channel toxin epsilon-KTx 1.2 (68 aa).

An N-terminal signal peptide occupies residues 1–26 (MKFSCGFLLIFLVLSAMIATFSEVEA). 4 disulfides stabilise this stretch: Cys-30/Cys-38, Cys-33/Cys-54, Cys-37/Cys-47, and Cys-42/Cys-52. The residue at position 55 (Tyr-55) is a Tyrosine amide. A propeptide spanning residues 57–68 (RSDLNEEFENYQ) is cleaved from the precursor.

This sequence belongs to the short scorpion toxin superfamily. Potassium channel inhibitor family. Epsilon-KTx 01 subfamily. In terms of tissue distribution, expressed by the venom gland.

It is found in the secreted. Its function is as follows. Potassium channel blocker. At 3 uM, this toxin blocks voltage-gated potassium channels rKv1.2/KCNA2 (5%), hKv1.3/KCNA3 (10%),rKv1.4/KCNA4 (20%), Kv11/hERG (24%), and Shaker-IR (27%). This Tityus serrulatus (Brazilian scorpion) protein is Potassium channel toxin epsilon-KTx 1.2.